A 126-amino-acid chain; its full sequence is Large ribosomal subunit protein uL22 (126 aa).

Belongs to the universal ribosomal protein uL22 family. Part of the 50S ribosomal subunit.

Functionally, this protein binds specifically to 23S rRNA; its binding is stimulated by other ribosomal proteins, e.g. L4, L17, and L20. It is important during the early stages of 50S assembly. It makes multiple contacts with different domains of the 23S rRNA in the assembled 50S subunit and ribosome. In terms of biological role, the globular domain of the protein is located near the polypeptide exit tunnel on the outside of the subunit, while an extended beta-hairpin is found that lines the wall of the exit tunnel in the center of the 70S ribosome. The polypeptide is Large ribosomal subunit protein uL22 (Prochlorococcus marinus (strain NATL2A)).